A 381-amino-acid polypeptide reads, in one-letter code: 4-hydroxy-3-methylbut-2-en-1-yl diphosphate synthase (flavodoxin) (381 aa).

[4Fe-4S] cluster contacts are provided by C280, C283, C315, and E322.

The protein belongs to the IspG family. [4Fe-4S] cluster serves as cofactor.

It catalyses the reaction (2E)-4-hydroxy-3-methylbut-2-enyl diphosphate + oxidized [flavodoxin] + H2O + 2 H(+) = 2-C-methyl-D-erythritol 2,4-cyclic diphosphate + reduced [flavodoxin]. It participates in isoprenoid biosynthesis; isopentenyl diphosphate biosynthesis via DXP pathway; isopentenyl diphosphate from 1-deoxy-D-xylulose 5-phosphate: step 5/6. Functionally, converts 2C-methyl-D-erythritol 2,4-cyclodiphosphate (ME-2,4cPP) into 1-hydroxy-2-methyl-2-(E)-butenyl 4-diphosphate. This is 4-hydroxy-3-methylbut-2-en-1-yl diphosphate synthase (flavodoxin) from Clavibacter sepedonicus (Clavibacter michiganensis subsp. sepedonicus).